The sequence spans 135 residues: Kappa-casein (135 aa).

A glycan (O-linked (GalNAc...) threonine) is linked at threonine 96. Serine 114 is subject to Phosphoserine; alternate. An O-linked (GalNAc...) serine; alternate glycan is attached at serine 114. O-linked (GalNAc...) threonine glycosylation occurs at threonine 131. Residue serine 132 is modified to Phosphoserine.

The protein belongs to the kappa-casein family. As to expression, mammary gland specific. Secreted in milk.

Its subcellular location is the secreted. Functionally, kappa-casein stabilizes micelle formation, preventing casein precipitation in milk. In Equus grevyi (Grevy's zebra), this protein is Kappa-casein (CSN3).